Consider the following 132-residue polypeptide: MTMTDPIADFLTRLRNANSAYHDEVSLPHSKLKANIAQILKNEGYISDFRTEDARVGKSLVIQLKYGPSRERSIAGLRRVSKPGLRVYAKSTNLPRVLGGLGVAIISTSSGLLTDRQAARQGVGGEVLAYVW.

This sequence belongs to the universal ribosomal protein uS8 family. Part of the 30S ribosomal subunit. Contacts proteins S5 and S12.

Functionally, one of the primary rRNA binding proteins, it binds directly to 16S rRNA central domain where it helps coordinate assembly of the platform of the 30S subunit. The protein is Small ribosomal subunit protein uS8 of Mycobacterium bovis (strain ATCC BAA-935 / AF2122/97).